Reading from the N-terminus, the 196-residue chain is Imidazoleglycerol-phosphate dehydratase (196 aa).

It belongs to the imidazoleglycerol-phosphate dehydratase family.

The protein resides in the cytoplasm. It carries out the reaction D-erythro-1-(imidazol-4-yl)glycerol 3-phosphate = 3-(imidazol-4-yl)-2-oxopropyl phosphate + H2O. Its pathway is amino-acid biosynthesis; L-histidine biosynthesis; L-histidine from 5-phospho-alpha-D-ribose 1-diphosphate: step 6/9. The chain is Imidazoleglycerol-phosphate dehydratase from Dehalococcoides mccartyi (strain CBDB1).